The primary structure comprises 237 residues: 4-hydroxy-tetrahydrodipicolinate reductase (237 aa).

NAD(+) contacts are provided by residues 11-16 (GASGRM), 92-94 (GTT), and 116-119 (GSNF). The active-site Proton donor/acceptor is the His148. His149 lines the (S)-2,3,4,5-tetrahydrodipicolinate pocket. Residue Lys152 is the Proton donor of the active site. 158-159 (GS) lines the (S)-2,3,4,5-tetrahydrodipicolinate pocket.

It belongs to the DapB family.

The protein localises to the cytoplasm. The catalysed reaction is (S)-2,3,4,5-tetrahydrodipicolinate + NAD(+) + H2O = (2S,4S)-4-hydroxy-2,3,4,5-tetrahydrodipicolinate + NADH + H(+). The enzyme catalyses (S)-2,3,4,5-tetrahydrodipicolinate + NADP(+) + H2O = (2S,4S)-4-hydroxy-2,3,4,5-tetrahydrodipicolinate + NADPH + H(+). Its pathway is amino-acid biosynthesis; L-lysine biosynthesis via DAP pathway; (S)-tetrahydrodipicolinate from L-aspartate: step 4/4. In terms of biological role, catalyzes the conversion of 4-hydroxy-tetrahydrodipicolinate (HTPA) to tetrahydrodipicolinate. The chain is 4-hydroxy-tetrahydrodipicolinate reductase from Xylella fastidiosa (strain 9a5c).